A 397-amino-acid chain; its full sequence is Glia-derived nexin (397 aa).

The N-terminal stretch at 1–19 is a signal peptide; that stretch reads MNWHFPFFILTTVTLSSVY. Residue N159 is glycosylated (N-linked (GlcNAc...) asparagine).

This sequence belongs to the serpin family.

The protein localises to the secreted. It is found in the extracellular space. Serine protease inhibitor with activity toward thrombin, trypsin, and urokinase. Promotes neurite extension by inhibiting thrombin. Binds heparin. The polypeptide is Glia-derived nexin (Serpine2) (Rattus norvegicus (Rat)).